The primary structure comprises 57 residues: DELTA-limacoditoxin(2)-Dv11 (57 aa).

A signal peptide spans 1–24 (MKFAKTFLLLFVVLLLLSIVMAEP).

Belongs to the limacoditoxin-2 (cecropin-like) family. Expressed by the venom secretory cell of the spine. The spine is a cuticular structure containing a single large nucleated venom-secreting cell at its base. It is an independent unit capable of producing, storing and injecting venom. On the back of D.vulnerans caterpillars, spines are grouped together by 50 to 100 to form scoli, of which there are eight in D.vulnerans.

The protein localises to the secreted. Peptide that induces pain in mammals and has insecticidal, antibacterial and antiparasitic activities. Induces partially reversible paralysis in D.melanogaster when tested at high doses. Shows a moderate antiparasitic activity against the major pathogenic nematode of ruminants (H.contortus, EC(50)=30.5 uM). Has potent or moderate antibacterial activities against A.baumannii (MIC&lt;0.25 ug/mL) and S.aureus (MIC=16 ug/mL). Has no activity on the other bacteria tested, nor on the fungus C.albicans. Strongly induces the increase of intracellular calcium in mice DRG neurons, which is a proxy for neuronal activation that would occur during nociception. This increase is due to influx of extracellular calcium, suggesting that the peptide forms pore or channel in neuronal cell membranes. In addition, intraplantar injection in mice provokes nocifensive behavior, suggesting a pain-inducing activity. This chain is DELTA-limacoditoxin(2)-Dv11, found in Doratifera vulnerans (Mottled cup moth).